The chain runs to 111 residues: Resistin-like beta (111 aa).

The signal sequence occupies residues 1 to 23 (MGPSSCLLLILIPLLQLINPGST). 5 disulfides stabilise this stretch: C55–C108, C67–C107, C76–C93, C78–C95, and C82–C97.

This sequence belongs to the resistin/FIZZ family. Homodimer; disulfide-linked. Expressed only in the gastrointestinal tract, particularly the colon.

Its subcellular location is the secreted. Functionally, probable hormone. The polypeptide is Resistin-like beta (RETNLB) (Homo sapiens (Human)).